A 279-amino-acid polypeptide reads, in one-letter code: Small ribosomal subunit protein uS3 (279 aa).

Positions 17–86 (VDEYFLEKLE…NPQIDVQEVK (70 aa)) constitute a KH type-2 domain. Composition is skewed to low complexity over residues 206-233 (AEKKSPAAGAEPAKEAAAVPAPAESTAA) and 241-252 (ESEAAEAVTPEG). Positions 206–279 (AEKKSPAAGA…VVKTDGDSQS (74 aa)) are disordered.

The protein belongs to the universal ribosomal protein uS3 family. In terms of assembly, part of the 30S ribosomal subunit.

Functionally, binds the lower part of the 30S subunit head. This is Small ribosomal subunit protein uS3 from Methanocella arvoryzae (strain DSM 22066 / NBRC 105507 / MRE50).